The following is a 415-amino-acid chain: 3-oxoacyl-[acyl-carrier-protein] synthase 2 (415 aa).

Residues K3–K412 form the Ketosynthase family 3 (KS3) domain. Residues C164, H304, and H342 each act as for beta-ketoacyl synthase activity in the active site.

It belongs to the thiolase-like superfamily. Beta-ketoacyl-ACP synthases family. Homodimer.

The enzyme catalyses a fatty acyl-[ACP] + malonyl-[ACP] + H(+) = a 3-oxoacyl-[ACP] + holo-[ACP] + CO2. It carries out the reaction (9Z)-hexadecenoyl-[ACP] + malonyl-[ACP] + H(+) = 3-oxo-(11Z)-octadecenoyl-[ACP] + holo-[ACP] + CO2. It functions in the pathway lipid metabolism; fatty acid biosynthesis. Involved in the type II fatty acid elongation cycle. Catalyzes the elongation of a wide range of acyl-ACP by the addition of two carbons from malonyl-ACP to an acyl acceptor. Can efficiently catalyze the conversion of palmitoleoyl-ACP (cis-hexadec-9-enoyl-ACP) to cis-vaccenoyl-ACP (cis-octadec-11-enoyl-ACP), an essential step in the thermal regulation of fatty acid composition. This chain is 3-oxoacyl-[acyl-carrier-protein] synthase 2 (fabF), found in Vibrio harveyi (Beneckea harveyi).